Consider the following 313-residue polypeptide: CRISPR-associated endonuclease Cas1 1 (313 aa).

Positions 144, 211, and 224 each coordinate Mn(2+). Residues 288-313 (PPLDAPEAVDPVIPPEEPSGDDGHRG) form a disordered region.

The protein belongs to the CRISPR-associated endonuclease Cas1 family. In terms of assembly, homodimer, forms a heterotetramer with a Cas2 homodimer. Mg(2+) serves as cofactor. Requires Mn(2+) as cofactor.

In terms of biological role, CRISPR (clustered regularly interspaced short palindromic repeat), is an adaptive immune system that provides protection against mobile genetic elements (viruses, transposable elements and conjugative plasmids). CRISPR clusters contain spacers, sequences complementary to antecedent mobile elements, and target invading nucleic acids. CRISPR clusters are transcribed and processed into CRISPR RNA (crRNA). Acts as a dsDNA endonuclease. Involved in the integration of spacer DNA into the CRISPR cassette. The protein is CRISPR-associated endonuclease Cas1 1 of Rhodospirillum rubrum (strain ATCC 11170 / ATH 1.1.1 / DSM 467 / LMG 4362 / NCIMB 8255 / S1).